The sequence spans 138 residues: Aspartate 1-decarboxylase (138 aa).

The active-site Schiff-base intermediate with substrate; via pyruvic acid is the serine 25. The residue at position 25 (serine 25) is a Pyruvic acid (Ser). A substrate-binding site is contributed by threonine 57. Tyrosine 58 (proton donor) is an active-site residue. Substrate is bound at residue 73–75 (GAA).

The protein belongs to the PanD family. In terms of assembly, heterooctamer of four alpha and four beta subunits. It depends on pyruvate as a cofactor. Post-translationally, is synthesized initially as an inactive proenzyme, which is activated by self-cleavage at a specific serine bond to produce a beta-subunit with a hydroxyl group at its C-terminus and an alpha-subunit with a pyruvoyl group at its N-terminus.

Its subcellular location is the cytoplasm. It catalyses the reaction L-aspartate + H(+) = beta-alanine + CO2. Its pathway is cofactor biosynthesis; (R)-pantothenate biosynthesis; beta-alanine from L-aspartate: step 1/1. Its function is as follows. Catalyzes the pyruvoyl-dependent decarboxylation of aspartate to produce beta-alanine. The protein is Aspartate 1-decarboxylase of Renibacterium salmoninarum (strain ATCC 33209 / DSM 20767 / JCM 11484 / NBRC 15589 / NCIMB 2235).